A 376-amino-acid chain; its full sequence is Putative clathrin assembly protein At1g25240 (376 aa).

In terms of domain architecture, ENTH spans 25–156 (KTSFRNPDLD…FFLSDQIRRR (132 aa)).

The protein resides in the membrane. It localises to the clathrin-coated pit. Its subcellular location is the golgi apparatus. The protein localises to the cytoplasmic vesicle. It is found in the clathrin-coated vesicle. This is Putative clathrin assembly protein At1g25240 from Arabidopsis thaliana (Mouse-ear cress).